The sequence spans 228 residues: UPF0758 protein CTC_02075 (228 aa).

One can recognise an MPN domain in the interval 106–228 (NITNPKDAAY…YISLKEKDIL (123 aa)). Zn(2+)-binding residues include His177, His179, and Asp190. A JAMM motif motif is present at residues 177 to 190 (HNHPSGDTTPSKED).

The protein belongs to the UPF0758 family.

This Clostridium tetani (strain Massachusetts / E88) protein is UPF0758 protein CTC_02075.